We begin with the raw amino-acid sequence, 167 residues long: Novel acetylcholine receptor chaperone (167 aa).

Residues 1-5 (MASPR) are Cytoplasmic-facing. Residues 6–26 (TITIMALSVALGLFFVFMGTI) traverse the membrane as a helical segment. At 27–61 (KLTPRLSKDAYSEMKRAYKSYVRALPLLKKMGINS) the chain is on the lumenal side. An interaction with NGFR region spans residues 43–54 (AYKSYVRALPLL). Residues 62 to 82 (ILLRKSIGALEVACGIVMTLV) form a helical membrane-spanning segment. At 83 to 88 (PGRPKD) the chain is on the cytoplasmic side. Residues 89–109 (VANFFLLLLVLAVLFFHQLVG) form a helical membrane-spanning segment. Residues 110-114 (DPLKR) are Lumenal-facing. A helical membrane pass occupies residues 115–132 (YAHALVFGILLTCRLLIA). The Cytoplasmic segment spans residues 133–167 (RKPEDRSSEKKALPESAEEQPSLYEKAPQGKVKVS). Residues 135 to 145 (PEDRSSEKKAL) show a composition bias toward basic and acidic residues. A disordered region spans residues 135 to 167 (PEDRSSEKKALPESAEEQPSLYEKAPQGKVKVS).

It belongs to the DoxX family. May interact with NGFR. Interacts with RPN1, RPN2 and CANX. As to expression, brain (at protein level). Expressed in the spinal cord dorsal horn (at protein level).

It is found in the peroxisome membrane. It localises to the cytoplasmic vesicle. The protein resides in the endoplasmic reticulum membrane. Functionally, molecular chaperone which mediates the proper assembly and functional expression of the nicotinic acetylcholine receptors (nAChRs) throughout the brain. Essential for the proper folding, assembly, function and surface trafficking of alpha-7 (CHRNA7), alpha-4-beta-2, alpha-3-beta-2 and alpha-3-beta-4 receptors. Stably associates with ribophorin-1 (RPN1) and ribophorin-2 (RPN2) (components of the oligosaccharyl transferase (OST) complex) and with calnexin (CANX), both of which are critical for NACHO-mediated effects on CHRNA7 assembly and function. Facilitates the proper folding and assembly of alpha-6-beta-2 and alpha-6-beta-2-beta-3 receptors and acts at early stages of the nAChRs subunit assembly. Promotes the expression of the alpha-4(2):beta-2(3) stoichiometric form over the alpha-4(3):beta-2(2) form. This is Novel acetylcholine receptor chaperone from Mus musculus (Mouse).